Reading from the N-terminus, the 114-residue chain is Reprimo-like protein (114 aa).

The helical transmembrane segment at 61 to 81 (VVQIAVLCVLSLTVMFGIFFL) threads the bilayer.

It belongs to the reprimo family.

It is found in the membrane. The chain is Reprimo-like protein (rprml) from Danio rerio (Zebrafish).